We begin with the raw amino-acid sequence, 542 residues long: DM7 family protein GG17591 (542 aa).

Residues 415–430 (GETQEMDEAHPTKEES) are compositionally biased toward basic and acidic residues. The interval 415 to 443 (GETQEMDEAHPTKEESKSEEEGEVQSGSQ) is disordered.

The protein belongs to the DM7 family.

The protein is DM7 family protein GG17591 of Drosophila erecta (Fruit fly).